Reading from the N-terminus, the 270-residue chain is Phosphatidate cytidylyltransferase (270 aa).

7 helical membrane-spanning segments follow: residues 19-39, 53-73, 76-96, 101-121, 126-146, 183-203, and 248-268; these read LWLTWVGGVGFTLFSIAIGLA, TAFSRLFGWAWLIVTGILLIL, GALLTIGFLVAGCAILLVTQW, GWPAAGLFYAGFSALSLSLLR, FGFTTIVFLFAVVWSTDITAY, LVASLVAAPGGWGVPVLALLL, and ALLYLFGAIFAEPDVLSAIFF.

It belongs to the CDS family.

It localises to the cell inner membrane. The catalysed reaction is a 1,2-diacyl-sn-glycero-3-phosphate + CTP + H(+) = a CDP-1,2-diacyl-sn-glycerol + diphosphate. Its pathway is phospholipid metabolism; CDP-diacylglycerol biosynthesis; CDP-diacylglycerol from sn-glycerol 3-phosphate: step 3/3. This is Phosphatidate cytidylyltransferase (cdsA) from Brucella abortus (strain 2308).